A 185-amino-acid chain; its full sequence is ATP synthase subunit delta (185 aa).

The protein belongs to the ATPase delta chain family. F-type ATPases have 2 components, F(1) - the catalytic core - and F(0) - the membrane proton channel. F(1) has five subunits: alpha(3), beta(3), gamma(1), delta(1), epsilon(1). CF(0) has four main subunits: a(1), b(1), b'(1) and c(10-14). The alpha and beta chains form an alternating ring which encloses part of the gamma chain. F(1) is attached to F(0) by a central stalk formed by the gamma and epsilon chains, while a peripheral stalk is formed by the delta, b and b' chains.

It localises to the cell inner membrane. F(1)F(0) ATP synthase produces ATP from ADP in the presence of a proton or sodium gradient. F-type ATPases consist of two structural domains, F(1) containing the extramembraneous catalytic core and F(0) containing the membrane proton channel, linked together by a central stalk and a peripheral stalk. During catalysis, ATP synthesis in the catalytic domain of F(1) is coupled via a rotary mechanism of the central stalk subunits to proton translocation. Functionally, this protein is part of the stalk that links CF(0) to CF(1). It either transmits conformational changes from CF(0) to CF(1) or is implicated in proton conduction. This chain is ATP synthase subunit delta, found in Gloeobacter violaceus (strain ATCC 29082 / PCC 7421).